A 132-amino-acid chain; its full sequence is uncharacterized protein (132 aa).

It belongs to the mycobacterial PPE family.

This is an uncharacterized protein from Mycobacterium tuberculosis (strain ATCC 25618 / H37Rv).